The primary structure comprises 285 residues: Malonyl-[acyl-carrier protein] O-methyltransferase (285 aa).

It belongs to the methyltransferase superfamily.

The catalysed reaction is malonyl-[ACP] + S-adenosyl-L-methionine = malonyl-[ACP] methyl ester + S-adenosyl-L-homocysteine. It participates in cofactor biosynthesis; biotin biosynthesis. Converts the free carboxyl group of a malonyl-thioester to its methyl ester by transfer of a methyl group from S-adenosyl-L-methionine (SAM). It allows to synthesize pimeloyl-ACP via the fatty acid synthetic pathway. The polypeptide is Malonyl-[acyl-carrier protein] O-methyltransferase (Bacillus cytotoxicus (strain DSM 22905 / CIP 110041 / 391-98 / NVH 391-98)).